We begin with the raw amino-acid sequence, 39 residues long: Hementin (39 aa).

A divalent metal cation serves as cofactor. As to expression, expressed mainly in the posterior salivary glands and, to a lesser extent, in the anterior salivary glands and secreted into the proboscis (at protein level).

It is found in the secreted. Its activity is regulated as follows. Inhibited by EDTA, cysteine, DTT and sodium phosphate. Partially inhibited by EGTA, citrate, Tris and glycine. Not inhibited by DFP, PMSF, iodoacetic acid and leupeptin. Requires sodium chloride concentrations higher than 0.15 M for activity. Metalloprotease with anticoagulant activity. Cleaves fibrinogen Aalpha (FGA), gamma (FGG) and Bbeta (FGB) chains after positions 'Asn-121', 'Lys-160' and 'Pro-102', respectively. Breaks down cross-linked and non-cross-linked fibrin clots. Prevents and reverts platelet aggregation induced by ADP and collagen. Prevents thrombin-induced platelet clotting. Does not affect plasma levels of coagulation factors prothrombin (F2), V (F5), VII (F7), VIII (F8), IX (F9), X (F10), XI (F11), XII (F12), plasma kallikrein (KLKB1) and kininogen-1 (KNG1). In Haementeria ghilianii (Amazon leech), this protein is Hementin.